Reading from the N-terminus, the 758-residue chain is 5-methyltetrahydropteroyltriglutamate--homocysteine methyltransferase (758 aa).

5-methyltetrahydropteroyltri-L-glutamate contacts are provided by residues R16 to K19 and K112. L-homocysteine is bound by residues I433–S435 and E486. L-methionine-binding positions include I433 to S435 and E486. 5-methyltetrahydropteroyltri-L-glutamate-binding positions include R517–C518 and W563. Residue D601 participates in L-homocysteine binding. D601 lines the L-methionine pocket. Residue E607 coordinates 5-methyltetrahydropteroyltri-L-glutamate. Zn(2+) contacts are provided by H643, C645, and E667. H696 (proton donor) is an active-site residue. Position 728 (C728) interacts with Zn(2+).

This sequence belongs to the vitamin-B12 independent methionine synthase family. The cofactor is Zn(2+).

The enzyme catalyses 5-methyltetrahydropteroyltri-L-glutamate + L-homocysteine = tetrahydropteroyltri-L-glutamate + L-methionine. Its pathway is amino-acid biosynthesis; L-methionine biosynthesis via de novo pathway; L-methionine from L-homocysteine (MetE route): step 1/1. Its function is as follows. Catalyzes the transfer of a methyl group from 5-methyltetrahydrofolate to homocysteine resulting in methionine formation. This chain is 5-methyltetrahydropteroyltriglutamate--homocysteine methyltransferase, found in Neisseria meningitidis serogroup B (strain ATCC BAA-335 / MC58).